Here is a 64-residue protein sequence, read N- to C-terminus: Lantibiotic actagardine (64 aa).

The propeptide occupies 1 to 45 (MSALAIEKSWKDVDLRDGATSHPAGLGFGELTFEDLREDRTIYAA). The segment at residues 46 to 51 (SSGWVC) is a cross-link (lanthionine (Ser-Cys)). Cross-links (beta-methyllanthionine (Thr-Cys)) lie at residues 52-57 (TLTIEC) and 54-62 (TIECGTVIC). The segment at residues 59-64 (TVICAC) is a cross-link (beta-methyllanthionine sulfoxide (Thr-Cys)).

This sequence belongs to the type B lantibiotic family. Maturation of lantibiotics involves the enzymatic conversion of Thr, and Ser into dehydrated AA by the enzyme garM and the formation of thioether bonds with cysteine. The 59-64 beta-methyllanthionine thioether bond is oxidized to a sulfoxide by the monooxygenase GarO. This is followed by membrane translocation and cleavage of the modified precursor. Post-translationally, the sulfoxide group of the 59-64 beta-methyllanthionine thioether bond is mildly important for activity, since the antibacterial activity of deoxyactagardine is marginally lower compared with oxidized actagardine.

In terms of biological role, has potent antibacterial activity against some Gram-positive bacteria. Has good antistreptococcal activity. Inhibits cell wall biosynthesis by binding to lipid II and blocking transglycosylation. This Actinoplanes garbadinensis protein is Lantibiotic actagardine.